The following is a 234-amino-acid chain: Small ribosomal subunit protein uS3 (234 aa).

The region spanning 39–107 (IRKMLKERLK…EVHLNLVEVR (69 aa)) is the KH type-2 domain. The segment covering 215–227 (QERRLQESGEQRA) has biased composition (basic and acidic residues). The tract at residues 215-234 (QERRLQESGEQRARSGRQAA) is disordered.

It belongs to the universal ribosomal protein uS3 family. In terms of assembly, part of the 30S ribosomal subunit. Forms a tight complex with proteins S10 and S14.

Binds the lower part of the 30S subunit head. Binds mRNA in the 70S ribosome, positioning it for translation. This is Small ribosomal subunit protein uS3 from Maricaulis maris (strain MCS10) (Caulobacter maris).